Consider the following 188-residue polypeptide: F-box only protein 36 (188 aa).

In terms of domain architecture, F-box spans 91–137; it reads FDFLERLSDDLLLNIISYLDLEDIARLCQTSHRFAKLCMSDKLWEQI.

In terms of assembly, directly interacts with SKP1 and CUL1.

Functionally, substrate-recognition component of the SCF (SKP1-CUL1-F-box protein)-type E3 ubiquitin ligase complex. In Pongo abelii (Sumatran orangutan), this protein is F-box only protein 36 (FBXO36).